We begin with the raw amino-acid sequence, 413 residues long: Tyrosine--tRNA ligase 2 (413 aa).

A 'HIGH' region motif is present at residues 58–67 (PSAPDVHLGH). 2 consecutive repeat copies span residues 89–94 (GDFTGK) and 96–101 (GDPTGK). Residues 89–101 (GDFTGKIGDPTGK) form a 2 X 6 AA tandem repeats region. A 'KMSKS' region motif is present at residues 242 to 246 (KMSKS). Residue lysine 245 coordinates ATP. The S4 RNA-binding domain maps to 353–413 (IAMIDLLVKL…VGKRKFLKLQ (61 aa)).

Belongs to the class-I aminoacyl-tRNA synthetase family. TyrS type 2 subfamily. In terms of assembly, homodimer.

The protein localises to the cytoplasm. It carries out the reaction tRNA(Tyr) + L-tyrosine + ATP = L-tyrosyl-tRNA(Tyr) + AMP + diphosphate + H(+). Functionally, catalyzes the attachment of tyrosine to tRNA(Tyr) in a two-step reaction: tyrosine is first activated by ATP to form Tyr-AMP and then transferred to the acceptor end of tRNA(Tyr). The polypeptide is Tyrosine--tRNA ligase 2 (Bacillus subtilis (strain 168)).